We begin with the raw amino-acid sequence, 164 residues long: Diphosphoinositol polyphosphate phosphohydrolase 3-alpha (164 aa).

Substrate-binding positions include Arg9, 17-19 (KKR), and 38-40 (SSR). Positions 17–144 (KKRAACLCFR…VHAEYLEKLK (128 aa)) constitute a Nudix hydrolase domain. The Mg(2+) site is built by Gly49 and Glu65. Residues 50–71 (GGMEPEEEPGGAAVREVYEEAG) carry the Nudix box motif. Glu68 serves as the catalytic Proton acceptor. A Mg(2+)-binding site is contributed by Glu69. Substrate is bound by residues 89–91 (PKH), Arg115, and Lys133. The disordered stretch occupies residues 144–164 (KLGGSPTNGNSMAPSSPDSDP). A compositionally biased stretch (polar residues) spans 148–164 (SPTNGNSMAPSSPDSDP).

Belongs to the Nudix hydrolase family. DIPP subfamily. The cofactor is Mg(2+). Mn(2+) is required as a cofactor. In terms of tissue distribution, mainly expressed in testis and, at lower level in brain. According to PubMed:12121577, it is widely expressed.

It localises to the cytoplasm. It catalyses the reaction diphospho-myo-inositol polyphosphate + H2O = myo-inositol polyphosphate + phosphate.. It carries out the reaction P(1),P(6)-bis(5'-adenosyl) hexaphosphate + H2O = adenosine 5'-pentaphosphate + AMP + 2 H(+). The enzyme catalyses P(1),P(5)-bis(5'-adenosyl) pentaphosphate + H2O = adenosine 5'-tetraphosphate + AMP + 2 H(+). In terms of biological role, cleaves a beta-phosphate from the diphosphate groups in PP-InsP5 (diphosphoinositol pentakisphosphate), suggesting that it may play a role in signal transduction. Also able to catalyze the hydrolysis of dinucleoside oligophosphates, with Ap6A and Ap5A being the preferred substrates. The major reaction products are ADP and p4a from Ap6A and ADP and ATP from Ap5A. Also able to hydrolyze 5-phosphoribose 1-diphosphate. The chain is Diphosphoinositol polyphosphate phosphohydrolase 3-alpha (NUDT10) from Homo sapiens (Human).